The following is a 537-amino-acid chain: MAKEAQSLHELDNMKEKEVDQEKKAPTSVGDQEEHDDPKKQASHSQNVSENGLVDEAAQEAPEDESQYPGPLAMAVIMVAISMGMFLVSLLPLGRFYKFYSPKWVYMSLVFIFVIGSAVGAGAMNSNTVIVGRAIQGIGLGGVLSGSTILIAENAPLHRQPMFLGILMATMSISAIVGPLIGGALTTHTSWRWCFILNIPIGGAIIAVLFFFVKAREGKEQRAQGWVEKIRQLDPLGSALLLPAVVCLILALQWAGSQYSWDNWRIILLFVFGGLLSIGFVVSQMLRPDTATVPPHVVCQRTVFGSFLFSAMTGGAMLVVTYWISDWFQAVQNVSAAQAGIRTIALVLSQAVGAIMGGGSSRLIGYPPPIMMISATFIAVGAGLLTTLNVDTKSANWIGYQILMGLGLGFGTQQASLAVQTVLKKDDIPTAISLIFFGMQLGGSIFVCIGQNVFNQVFVKLLGQAAIPGLDTDLVLRTGATEIRQLVHNDADLSKLVTTYNTSVTSTFYVALAAGITSMLSAFLVQWKSVKNVEPVH.

Residues 1–25 are compositionally biased toward basic and acidic residues; it reads MAKEAQSLHELDNMKEKEVDQEKKA. Residues 1–50 are disordered; that stretch reads MAKEAQSLHELDNMKEKEVDQEKKAPTSVGDQEEHDDPKKQASHSQNVSE. Residue N47 is glycosylated (N-linked (GlcNAc...) asparagine). Transmembrane regions (helical) follow at residues 71–91, 104–124, 137–157, 162–182, 193–213, 236–256, 266–286, and 304–324; these read PLAM…VSLL, WVYM…AGAM, GIGL…NAPL, MFLG…PLIG, WCFI…FFFV, LGSA…QWAG, IILL…SQML, and FGSF…TYWI. A glycan (N-linked (GlcNAc...) asparagine) is linked at N333. The next 4 membrane-spanning stretches (helical) occupy residues 339–359, 363–383, 397–417, and 430–450; these read AGIR…MGGG, LIGY…VGAG, WIGY…QASL, and TAIS…VCIG. A glycan (N-linked (GlcNAc...) asparagine) is linked at N501. A helical transmembrane segment spans residues 507-527; it reads TFYVALAAGITSMLSAFLVQW.

The protein belongs to the major facilitator superfamily. TCR/Tet family.

The protein resides in the cell membrane. Efflux pump; part of the gene cluster that mediates the biosynthesis of ustilaginoidins, dimeric gamma-naphthopyrones isolated from different fungal species. This Ustilaginoidea virens (Rice false smut fungus) protein is Efflux pump ustT.